A 379-amino-acid polypeptide reads, in one-letter code: Heme chaperone HemW (379 aa).

In terms of domain architecture, Radical SAM core spans 1–232; it reads MLQKPNSAYF…MDILAKNGYN (232 aa). Tyr9 contributes to the S-adenosyl-L-methionine binding site. [4Fe-4S] cluster is bound by residues Cys15, Cys19, and Cys22. Residues Gly60, 61 to 62, Glu93, Gln120, Arg132, and Asp157 each bind S-adenosyl-L-methionine; that span reads GT.

Belongs to the anaerobic coproporphyrinogen-III oxidase family. HemW subfamily. In terms of assembly, homodimer.

It localises to the cytoplasm. It is found in the cell membrane. Could serve in the delivery of heme to a membrane-localized target protein. Binds one molecule of heme per monomer, possibly covalently; heme and Fe-S cluster binding are independent. Incubation with the reductant sodium dithionite increases binding. Does not have coproporphyrinogen III dehydrogenase activity in vitro, does not complement an E.coli hemN deletion in vivo. Binds 1 Fe-S cluster, it is probably [4Fe-4S]. The cluster is coordinated with 3 cysteines and an exchangeable S-adenosyl-L-methionine; only dimeric protein has the cluster. The protein is Heme chaperone HemW of Lactococcus lactis subsp. lactis (strain IL1403) (Streptococcus lactis).